We begin with the raw amino-acid sequence, 119 residues long: Protein TusC (119 aa).

This sequence belongs to the DsrF/TusC family. As to quaternary structure, heterohexamer, formed by a dimer of trimers. The hexameric TusBCD complex contains 2 copies each of TusB, TusC and TusD. The TusBCD complex interacts with TusE.

The protein resides in the cytoplasm. Its function is as follows. Part of a sulfur-relay system required for 2-thiolation of 5-methylaminomethyl-2-thiouridine (mnm(5)s(2)U) at tRNA wobble positions. This Cronobacter sakazakii (strain ATCC BAA-894) (Enterobacter sakazakii) protein is Protein TusC.